The chain runs to 250 residues: Non-specific acid phosphatase (250 aa).

An N-terminal signal peptide occupies residues Met1–Ala20.

This sequence belongs to the class A bacterial acid phosphatase family. In terms of assembly, homodimer.

The protein localises to the periplasm. It catalyses the reaction a phosphate monoester + H2O = an alcohol + phosphate. This is Non-specific acid phosphatase (phoN) from Salmonella typhi.